Reading from the N-terminus, the 384-residue chain is Cytochrome b (384 aa).

4 helical membrane passes run 32–52, 76–98, 113–133, and 179–199; these read FGFL…FLAI, WLLR…IHIS, TWVV…MGYV, and FFSF…VHMA. Positions 82 and 96 each coordinate heme b. 2 residues coordinate heme b: H183 and H197. Residue H202 coordinates a ubiquinone. The next 4 membrane-spanning stretches (helical) occupy residues 225 to 245, 289 to 309, 321 to 341, and 348 to 368; these read FIIK…LFVY, LGGV…PWIT, LYKK…WIGG, and YVVI…IFIP.

The protein belongs to the cytochrome b family. In terms of assembly, the main subunits of complex b-c1 are: cytochrome b, cytochrome c1 and the Rieske protein. The cofactor is heme b.

It is found in the mitochondrion inner membrane. Functionally, component of the ubiquinol-cytochrome c reductase complex (complex III or cytochrome b-c1 complex) that is part of the mitochondrial respiratory chain. The b-c1 complex mediates electron transfer from ubiquinol to cytochrome c. Contributes to the generation of a proton gradient across the mitochondrial membrane that is then used for ATP synthesis. The protein is Cytochrome b (MT-CYB) of Cyanidium caldarium (Red alga).